We begin with the raw amino-acid sequence, 262 residues long: Ribosome-recycling factor, mitochondrial (262 aa).

The transit peptide at 1-55 directs the protein to the mitochondrion; it reads MALGIRCFRLLHPAFSSYLADLSRPVSEVPMKTVRGRQRDHIQYSAHPAVPVRQF.

It belongs to the RRF family.

Its subcellular location is the mitochondrion. Functionally, responsible for the disassembly of ribosomes from messenger RNA at the termination of mitochondrial protein biosynthesis. Acts in collaboration with GFM2. Promotes mitochondrial ribosome recycling by dissolution of intersubunit contacts. The polypeptide is Ribosome-recycling factor, mitochondrial (Mrrf) (Rattus norvegicus (Rat)).